The chain runs to 142 residues: Neuritin (142 aa).

Residues M1–A27 form the signal peptide. A lipid anchor (GPI-anchor amidated glycine) is attached at G116. Positions A117–F142 are cleaved as a propeptide — removed in mature form.

Belongs to the neuritin family. As to quaternary structure, component of the outer core of AMPAR complex. AMPAR complex consists of an inner core made of 4 pore-forming GluA/GRIA proteins (GRIA1, GRIA2, GRIA3 and GRIA4) and 4 major auxiliary subunits arranged in a twofold symmetry. One of the two pairs of distinct binding sites is occupied either by CNIH2, CNIH3 or CACNG2, CACNG3. The other harbors CACNG2, CACNG3, CACNG4, CACNG8 or GSG1L. This inner core of AMPAR complex is complemented by outer core constituents binding directly to the GluA/GRIA proteins at sites distinct from the interaction sites of the inner core constituents. Outer core constituents include at least PRRT1, PRRT2, CKAMP44/SHISA9, FRRS1L and NRN1. The proteins of the inner and outer core serve as a platform for other, more peripherally associated AMPAR constituents. Alone or in combination, these auxiliary subunits control the gating and pharmacology of the AMPAR complex and profoundly impact their biogenesis and protein processing. Expressed in the brain (at protein level).

Its subcellular location is the cell membrane. The protein localises to the synapse. Promotes neurite outgrowth and especially branching of neuritic processes in primary hippocampal and cortical cells. The polypeptide is Neuritin (Nrn1) (Mus musculus (Mouse)).